Here is a 308-residue protein sequence, read N- to C-terminus: MEYSHKSVLLKETIEYLNIKPEGIYVDGTLGGGGHSEEILKRLTTGKLIAIDRDLDAIKASKERLKNYKNVEYINDNFKNIKEILKSLNIDKVDGILLDLGVSSYQLEEVKRGFSYMKDAPMDMRMDKNSPFSAYDVVNKYSQQELERVIREYGEEKWASRIAKFIVKEREKGEIKTTFQLVEIIKNAIPASARREGPHPAKRTFQAIRIEVNEELKGLDKAIEDMVEVLRGKGRIAIITFHSLEDRIVKNTFKKLENPCTCPPNMPCTCGKKPVVKIITKKPVLPSKEEIETNSRSRSAKLRVAEKL.

Residues 33-35, D52, F78, D99, and Q106 contribute to the S-adenosyl-L-methionine site; that span reads GGH. Residues 289–308 form a disordered region; the sequence is EEIETNSRSRSAKLRVAEKL.

Belongs to the methyltransferase superfamily. RsmH family.

It is found in the cytoplasm. The enzyme catalyses cytidine(1402) in 16S rRNA + S-adenosyl-L-methionine = N(4)-methylcytidine(1402) in 16S rRNA + S-adenosyl-L-homocysteine + H(+). Functionally, specifically methylates the N4 position of cytidine in position 1402 (C1402) of 16S rRNA. This Thermoanaerobacter sp. (strain X514) protein is Ribosomal RNA small subunit methyltransferase H.